We begin with the raw amino-acid sequence, 276 residues long: NAD(+)--protein-threonine ADP-ribosyltransferase (276 aa).

As to quaternary structure, interacts directly with host ubiquitin.

It is found in the secreted. The protein localises to the host cell. The catalysed reaction is L-threonyl-[protein] + NAD(+) = O-(ADP-D-ribosyl)-L-threonyl-[protein] + nicotinamide + H(+). Functionally, ADP-ribosyltransferase that specifically modifies host ubiquitin on 'Thr-66' residue, which causes the shutdown of polyubiquitin synthesis and disrupts the recognition and reversal of polyubiquitin in host cells during infection. Threonine ADP-ribosylation of ubiquitin prevents the transfer of ubiquitin from ubiquitin-activating enzyme E1 to ubiquitin-conjugating enzyme E2, which inhibits subsequent ubiquitin activation and leads to the shutdown of polyubiquitin synthesis in host cells. The modification also causes dysfunction of polyubiquitin chains in cells, thereby blocking host ubiquitin signaling. ADP-ribosylation by CteC is likely irreversible. Plays a crucial role in bacterial colonization in mice during infection. This chain is NAD(+)--protein-threonine ADP-ribosyltransferase, found in Chromobacterium violaceum (strain ATCC 12472 / DSM 30191 / JCM 1249 / CCUG 213 / NBRC 12614 / NCIMB 9131 / NCTC 9757 / MK).